A 91-amino-acid polypeptide reads, in one-letter code: Uteroglobin (91 aa).

The first 21 residues, 1-21 (MKLTIAIVLVTLTLFCRPAST), serve as a signal peptide directing secretion.

The protein belongs to the secretoglobin family. As to quaternary structure, antiparallel homodimer; disulfide-linked. Interaction with LMBR1L is controversial.

Its subcellular location is the secreted. Binds phosphatidylcholine, phosphatidylinositol, polychlorinated biphenyls (PCB) and weakly progesterone, potent inhibitor of phospholipase A2. The sequence is that of Uteroglobin (SCGB1A1) from Bos taurus (Bovine).